Here is a 430-residue protein sequence, read N- to C-terminus: Aspartate aminotransferase, mitochondrial (430 aa).

The transit peptide at Met1–Ala29 directs the protein to the mitochondrion. Residue Thr48 is modified to Phosphothreonine. Lys59 carries the N6-acetyllysine modification. A substrate-binding site is contributed by Gly65. An N6-acetyllysine; alternate modification is found at Lys73. Lys73 carries the N6-succinyllysine; alternate modification. N6-acetyllysine is present on Lys82. Lys90 is subject to N6-acetyllysine; alternate. Lys90 carries the post-translational modification N6-succinyllysine; alternate. The residue at position 96 (Tyr96) is a 3'-nitrotyrosine; alternate. Position 96 is a phosphotyrosine; alternate (Tyr96). N6-acetyllysine; alternate is present on residues Lys107 and Lys122. Residues Lys107 and Lys122 each carry the N6-succinyllysine; alternate modification. The residue at position 143 (Ser143) is a Phosphoserine. N6-acetyllysine; alternate is present on Lys159. An N6-succinyllysine; alternate modification is found at Lys159. Position 162 (Trp162) interacts with substrate. Lys185 is modified (N6-acetyllysine; alternate). At Lys185 the chain carries N6-succinyllysine; alternate. Position 215 (Asn215) interacts with substrate. Lys227 carries the N6-succinyllysine modification. At Lys234 the chain carries N6-acetyllysine. An N6-acetyllysine; alternate mark is found at Lys279 and Lys296. Position 279 is an N6-(pyridoxal phosphate)lysine; alternate (Lys279). Lys296 is modified (N6-succinyllysine; alternate). N6-acetyllysine is present on Lys302. Lys309 bears the N6-acetyllysine; alternate mark. Position 309 is an N6-succinyllysine; alternate (Lys309). An Asymmetric dimethylarginine modification is found at Arg313. Thr333 is subject to Phosphothreonine. At Lys338 the chain carries N6-acetyllysine; alternate. An N6-succinyllysine; alternate modification is found at Lys338. The residue at position 345 (Lys345) is an N6-acetyllysine. Lys363 bears the N6-acetyllysine; alternate mark. Lys363 carries the N6-succinyllysine; alternate modification. 2 positions are modified to N6-acetyllysine: Lys364 and Lys387. Lys396 and Lys404 each carry N6-acetyllysine; alternate. 2 positions are modified to N6-succinyllysine; alternate: Lys396 and Lys404. Residue Arg407 participates in substrate binding.

It belongs to the class-I pyridoxal-phosphate-dependent aminotransferase family. In terms of assembly, homodimer. Pyridoxal 5'-phosphate serves as cofactor.

Its subcellular location is the mitochondrion matrix. It localises to the cell membrane. It carries out the reaction L-aspartate + 2-oxoglutarate = oxaloacetate + L-glutamate. The enzyme catalyses L-kynurenine + 2-oxoglutarate = kynurenate + L-glutamate + H2O. In terms of biological role, catalyzes the irreversible transamination of the L-tryptophan metabolite L-kynurenine to form kynurenic acid (KA). As a member of the malate-aspartate shuttle, it has a key role in the intracellular NAD(H) redox balance. Is important for metabolite exchange between mitochondria and cytosol, and for amino acid metabolism. Facilitates cellular uptake of long-chain free fatty acids. This chain is Aspartate aminotransferase, mitochondrial (GOT2), found in Macaca fascicularis (Crab-eating macaque).